The primary structure comprises 251 residues: Pyrroloquinoline-quinone synthase (251 aa).

This sequence belongs to the PqqC family.

It carries out the reaction 6-(2-amino-2-carboxyethyl)-7,8-dioxo-1,2,3,4,7,8-hexahydroquinoline-2,4-dicarboxylate + 3 O2 = pyrroloquinoline quinone + 2 H2O2 + 2 H2O + H(+). The protein operates within cofactor biosynthesis; pyrroloquinoline quinone biosynthesis. Its function is as follows. Ring cyclization and eight-electron oxidation of 3a-(2-amino-2-carboxyethyl)-4,5-dioxo-4,5,6,7,8,9-hexahydroquinoline-7,9-dicarboxylic-acid to PQQ. This is Pyrroloquinoline-quinone synthase from Pseudomonas putida (strain ATCC 700007 / DSM 6899 / JCM 31910 / BCRC 17059 / LMG 24140 / F1).